Here is a 391-residue protein sequence, read N- to C-terminus: Probable tRNA sulfurtransferase (391 aa).

A THUMP domain is found at 60–167 (DEIIDHIKKV…KDNCYVYTDR (108 aa)). Residues 185 to 186 (LL), 210 to 211 (HF), arginine 267, glycine 289, and glutamine 298 contribute to the ATP site.

Belongs to the ThiI family.

It is found in the cytoplasm. It carries out the reaction [ThiI sulfur-carrier protein]-S-sulfanyl-L-cysteine + a uridine in tRNA + 2 reduced [2Fe-2S]-[ferredoxin] + ATP + H(+) = [ThiI sulfur-carrier protein]-L-cysteine + a 4-thiouridine in tRNA + 2 oxidized [2Fe-2S]-[ferredoxin] + AMP + diphosphate. It catalyses the reaction [ThiS sulfur-carrier protein]-C-terminal Gly-Gly-AMP + S-sulfanyl-L-cysteinyl-[cysteine desulfurase] + AH2 = [ThiS sulfur-carrier protein]-C-terminal-Gly-aminoethanethioate + L-cysteinyl-[cysteine desulfurase] + A + AMP + 2 H(+). It participates in cofactor biosynthesis; thiamine diphosphate biosynthesis. Functionally, catalyzes the ATP-dependent transfer of a sulfur to tRNA to produce 4-thiouridine in position 8 of tRNAs, which functions as a near-UV photosensor. Also catalyzes the transfer of sulfur to the sulfur carrier protein ThiS, forming ThiS-thiocarboxylate. This is a step in the synthesis of thiazole, in the thiamine biosynthesis pathway. The sulfur is donated as persulfide by IscS. This chain is Probable tRNA sulfurtransferase, found in Finegoldia magna (strain ATCC 29328 / DSM 20472 / WAL 2508) (Peptostreptococcus magnus).